A 346-amino-acid polypeptide reads, in one-letter code: Tetraacyldisaccharide 4'-kinase (346 aa).

53 to 60 (TCGGTGKT) lines the ATP pocket.

Belongs to the LpxK family.

The catalysed reaction is a lipid A disaccharide + ATP = a lipid IVA + ADP + H(+). It participates in glycolipid biosynthesis; lipid IV(A) biosynthesis; lipid IV(A) from (3R)-3-hydroxytetradecanoyl-[acyl-carrier-protein] and UDP-N-acetyl-alpha-D-glucosamine: step 6/6. Functionally, transfers the gamma-phosphate of ATP to the 4'-position of a tetraacyldisaccharide 1-phosphate intermediate (termed DS-1-P) to form tetraacyldisaccharide 1,4'-bis-phosphate (lipid IVA). The chain is Tetraacyldisaccharide 4'-kinase from Bartonella tribocorum (strain CIP 105476 / IBS 506).